The following is a 424-amino-acid chain: Serine--tRNA ligase (424 aa).

Residue 231 to 233 participates in L-serine binding; that stretch reads TAE. 262 to 264 is a binding site for ATP; it reads RAE. E285 lines the L-serine pocket. An ATP-binding site is contributed by 349–352; the sequence is EISS. Residue S385 coordinates L-serine.

The protein belongs to the class-II aminoacyl-tRNA synthetase family. Type-1 seryl-tRNA synthetase subfamily. As to quaternary structure, homodimer. The tRNA molecule binds across the dimer.

Its subcellular location is the cytoplasm. It carries out the reaction tRNA(Ser) + L-serine + ATP = L-seryl-tRNA(Ser) + AMP + diphosphate + H(+). The catalysed reaction is tRNA(Sec) + L-serine + ATP = L-seryl-tRNA(Sec) + AMP + diphosphate + H(+). Its pathway is aminoacyl-tRNA biosynthesis; selenocysteinyl-tRNA(Sec) biosynthesis; L-seryl-tRNA(Sec) from L-serine and tRNA(Sec): step 1/1. Its function is as follows. Catalyzes the attachment of serine to tRNA(Ser). Is also able to aminoacylate tRNA(Sec) with serine, to form the misacylated tRNA L-seryl-tRNA(Sec), which will be further converted into selenocysteinyl-tRNA(Sec). The chain is Serine--tRNA ligase from Geobacillus thermodenitrificans (strain NG80-2).